A 452-amino-acid chain; its full sequence is Probable cysteine protease RD21C (452 aa).

Positions 1 to 29 (MATSIKSITLALLIFSVLLISLSLGSVTA) are cleaved as a signal peptide. Positions 30–128 (TETTRNEAEA…EKYLYKVGDS (99 aa)) are cleaved as a propeptide — activation peptide. A glycan (N-linked (GlcNAc...) asparagine) is linked at Asn-82. Disulfide bonds link Cys-150/Cys-192, Cys-184/Cys-226, Cys-284/Cys-335, Cys-363/Cys-375, and Cys-369/Cys-390. Cys-153 is a catalytic residue. Catalysis depends on residues His-290 and Asn-310. Positions 346–452 (KSSGSNPPKP…KSTNMLVGSA (107 aa)) are cleaved as a propeptide — removed in mature form.

The protein belongs to the peptidase C1 family. As to quaternary structure, interacts with WSCP.

Functionally, probable thiol protease. In Arabidopsis thaliana (Mouse-ear cress), this protein is Probable cysteine protease RD21C.